The following is a 128-amino-acid chain: Large ribosomal subunit protein bL17 (128 aa).

This sequence belongs to the bacterial ribosomal protein bL17 family. Part of the 50S ribosomal subunit. Contacts protein L32.

The protein is Large ribosomal subunit protein bL17 of Haemophilus influenzae (strain 86-028NP).